We begin with the raw amino-acid sequence, 215 residues long: Cytochrome b6 (215 aa).

The chain crosses the membrane as a helical span at residues 32–52 (IFYCLGGITLTCFLVQVATGF). Heme c is bound at residue C35. Heme b contacts are provided by H86 and H100. 3 consecutive transmembrane segments (helical) span residues 90-110 (ASMM…TGGF), 116-136 (LTWV…VTGY), and 186-206 (LHTF…FLMI). 2 residues coordinate heme b: H187 and H202.

Belongs to the cytochrome b family. PetB subfamily. The 4 large subunits of the cytochrome b6-f complex are cytochrome b6, subunit IV (17 kDa polypeptide, PetD), cytochrome f and the Rieske protein, while the 4 small subunits are PetG, PetL, PetM and PetN. The complex functions as a dimer. Requires heme b as cofactor. It depends on heme c as a cofactor.

Its subcellular location is the plastid. It localises to the chloroplast thylakoid membrane. In terms of biological role, component of the cytochrome b6-f complex, which mediates electron transfer between photosystem II (PSII) and photosystem I (PSI), cyclic electron flow around PSI, and state transitions. The sequence is that of Cytochrome b6 from Pelargonium hortorum (Common geranium).